The primary structure comprises 87 residues: Small ribosomal subunit protein bS20 (87 aa).

This sequence belongs to the bacterial ribosomal protein bS20 family.

Its function is as follows. Binds directly to 16S ribosomal RNA. This is Small ribosomal subunit protein bS20 from Beijerinckia indica subsp. indica (strain ATCC 9039 / DSM 1715 / NCIMB 8712).